Here is a 44-residue protein sequence, read N- to C-terminus: Photosystem I reaction center subunit IX (44 aa).

Residues 7–27 traverse the membrane as a helical segment; it reads YLSVAPVISTLWFGSLAGLLI.

Belongs to the PsaJ family.

It localises to the plastid. The protein localises to the chloroplast thylakoid membrane. Its function is as follows. May help in the organization of the PsaE and PsaF subunits. The polypeptide is Photosystem I reaction center subunit IX (Ceratophyllum demersum (Rigid hornwort)).